A 427-amino-acid polypeptide reads, in one-letter code: Inward rectifier potassium channel 2 (427 aa).

At 1 to 81 (MGSVRTNRYS…IFTTCVDIRW (81 aa)) the chain is on the cytoplasmic side. Cys76 is modified (S-nitrosocysteine). The helical transmembrane segment at 82–106 (RWMLVIFCLAFVLSWLFFGCVFWLI) threads the bilayer. At 107-128 (ALLHGDLDASRESKACVSEVNS) the chain is on the extracellular side. The helical; Pore-forming intramembrane region spans 129–140 (FTAAFLFSIETQ). Positions 141 to 147 (TTIGYGF) form an intramembrane region, pore-forming. A Selectivity filter motif is present at residues 142-147 (TIGYGF). Residues 148 to 156 (RCVTDECPV) lie on the Extracellular side of the membrane. Residues 157–178 (AVFMVVFQSIVGCIIDAFIIGA) traverse the membrane as a helical segment. Residues 179 to 427 (VMAKMAKPKK…PRPLRRESEI (249 aa)) are Cytoplasmic-facing. The tract at residues 181–208 (AKMAKPKKRNETLVFSHNAVIAMRDGKL) is polyphosphoinositide (PIP2)-binding. A disordered region spans residues 384-427 (SKEEDDSENGVPESTSTDTPPDIDLHNQASVPLEPRPLRRESEI). The short motif at 425-427 (SEI) is the PDZ-binding element.

This sequence belongs to the inward rectifier-type potassium channel (TC 1.A.2.1) family. KCNJ2 subfamily. Homotetramer. Homomultimeric and heteromultimeric association with KCNJ4/Kir2.3. Can form heteromeric channels with Kir2.6/KCNJ18. Associates, via its PDZ-recognition domain, with a complex containing LIN7A, LIN7B, LIN7C, DLG1, CASK and APBA1. Post-translationally, S-nitrosylation increases the open probability and inward rectifying currents. As to expression, highly expressed in the ventricle and skeletal muscle, moderately in cerebrum and cerebellum. Only low levels are detected in kidney or lung.

It localises to the cell membrane. The protein resides in the sarcolemma. The protein localises to the T-tubule. It catalyses the reaction K(+)(in) = K(+)(out). Its activity is regulated as follows. Activated by phosphatidylinositol 4,5 biphosphate (PtdIns(4,5)P2). Inward rectifier potassium channels are characterized by a greater tendency to allow potassium to flow into the cell rather than out of it. Their voltage dependence is regulated by the concentration of extracellular potassium; as external potassium is raised, the voltage range of the channel opening shifts to more positive voltages. The inward rectification is mainly due to the blockage of outward current by internal magnesium. Can be blocked by extracellular barium and cesium. Probably participates in establishing action potential waveform and excitability of neuronal and muscle tissues. This Oryctolagus cuniculus (Rabbit) protein is Inward rectifier potassium channel 2 (KCNJ2).